The sequence spans 575 residues: 3-hydroxy-3-methylglutaryl-coenzyme A reductase 1 (575 aa).

A compositionally biased stretch (basic residues) spans 1-13 (MDTTGRLHHRKHA). The segment at 1–25 (MDTTGRLHHRKHATPVEDRSPTTPK) is disordered. Helical transmembrane passes span 29–49 (ALPL…FSVA) and 73–93 (EIVA…FFGI). Positions 97 to 160 (QSFIARASHD…PLIAPLVSEE (64 aa)) are linker. N-linked (GlcNAc...) asparagine glycosylation is present at asparagine 132. The tract at residues 161–575 (DEMIVNSVVD…SSKDMSKAAS (415 aa)) is catalytic. Glutamate 254 serves as the catalytic Charge relay system. A glycan (N-linked (GlcNAc...) asparagine) is linked at asparagine 318. Catalysis depends on charge relay system residues lysine 386 and aspartate 462. The helical transmembrane segment at 531 to 551 (LLAAIVAGSVLAGELSLMSAI) threads the bilayer. Histidine 560 functions as the Proton donor in the catalytic mechanism. Asparagine 564 is a glycosylation site (N-linked (GlcNAc...) asparagine).

This sequence belongs to the HMG-CoA reductase family.

It is found in the endoplasmic reticulum membrane. Its subcellular location is the mitochondrion membrane. The protein resides in the plastid membrane. The enzyme catalyses (R)-mevalonate + 2 NADP(+) + CoA = (3S)-3-hydroxy-3-methylglutaryl-CoA + 2 NADPH + 2 H(+). Its pathway is metabolic intermediate biosynthesis; (R)-mevalonate biosynthesis; (R)-mevalonate from acetyl-CoA: step 3/3. In terms of biological role, catalyzes the synthesis of mevalonate. The specific precursor of all isoprenoid compounds present in plants. The protein is 3-hydroxy-3-methylglutaryl-coenzyme A reductase 1 (HMGR1) of Hevea brasiliensis (Para rubber tree).